The sequence spans 571 residues: Oxysterol-binding protein 11 (571 aa).

The interval 1 to 73 is disordered; that stretch reads MSNFFKKLVK…IGEQIDTLDD (73 aa). The span at 33–42 shows a compositional bias: polar residues; it reads NGNQVVPDTA. Residues 43 to 54 are compositionally biased toward low complexity; that stretch reads SSYSDDSNSLSD. A coiled-coil region spans residues 387–420; the sequence is YLEREENKLANKEKNKIEEREREKRKTRESRKEI.

The protein belongs to the OSBP family.

This chain is Oxysterol-binding protein 11 (osbK), found in Dictyostelium discoideum (Social amoeba).